The sequence spans 735 residues: Muskelin (735 aa).

A2 is subject to N-acetylalanine. The LisH domain maps to R172–L204. The CTLH domain maps to H206–S258. Kelch repeat units lie at residues T284–K330, Q339–Q391, I408–G458, C469–T515, E526–E578, and V597–D651.

Homodimer; may form higher oligomers. Identified in the CTLH complex that contains GID4, RANBP9 and/or RANBP10, MKLN1, MAEA, RMND5A (or alternatively its paralog RMND5B), GID8, ARMC8, WDR26 and YPEL5. Within this complex, MAEA, RMND5A (or alternatively its paralog RMND5B), GID8, WDR26, and RANBP9 and/or RANBP10 form the catalytic core, while GID4, MKLN1, ARMC8 and YPEL5 have ancillary roles. Interacts with RANBP9. Part of a complex consisting of RANBP9, MKLN1 and GID8. Interacts with GABRA1. Interacts with the C-terminal tail of PTGER3.

The protein resides in the cytoplasm. The protein localises to the cytosol. It localises to the nucleus. It is found in the nucleoplasm. Its subcellular location is the cell projection. The protein resides in the ruffle. The protein localises to the cell cortex. It localises to the synapse. It is found in the postsynapse. Functionally, component of the CTLH E3 ubiquitin-protein ligase complex that selectively accepts ubiquitin from UBE2H and mediates ubiquitination and subsequent proteasomal degradation of the transcription factor HBP1. Required for internalization of the GABA receptor GABRA1 from the cell membrane via endosomes and subsequent GABRA1 degradation. Acts as a mediator of cell spreading and cytoskeletal responses to the extracellular matrix component THBS1. The chain is Muskelin (MKLN1) from Homo sapiens (Human).